The sequence spans 453 residues: Adenylyltransferase and sulfurtransferase MOCS3 (453 aa).

Thr62 is subject to Phosphothreonine. Residues Gly101, Asp122, 129–133 (SNFHR), Lys146, and 190–191 (DN) each bind ATP. Residues Cys231 and Cys234 each coordinate Zn(2+). Cys248 serves as the catalytic Glycyl thioester intermediate; for adenylyltransferase activity. Cys306 and Cys309 together coordinate Zn(2+). Residues 355–451 (QAKPHLLIDV…WTSNIDPNFP (97 aa)) enclose the Rhodanese domain. Residue Cys410 is the Cysteine persulfide intermediate; for sulfurtransferase activity of the active site.

This sequence in the N-terminal section; belongs to the HesA/MoeB/ThiF family. UBA4 subfamily. Zn(2+) is required as a cofactor.

The protein resides in the cytoplasm. It is found in the cytosol. It catalyses the reaction [molybdopterin-synthase sulfur-carrier protein]-C-terminal Gly-Gly + ATP + H(+) = [molybdopterin-synthase sulfur-carrier protein]-C-terminal Gly-Gly-AMP + diphosphate. The enzyme catalyses [molybdopterin-synthase sulfur-carrier protein]-C-terminal Gly-Gly-AMP + S-sulfanyl-L-cysteinyl-[cysteine desulfurase] + AH2 = [molybdopterin-synthase sulfur-carrier protein]-C-terminal-Gly-aminoethanethioate + L-cysteinyl-[cysteine desulfurase] + A + AMP + 2 H(+). Its pathway is tRNA modification; 5-methoxycarbonylmethyl-2-thiouridine-tRNA biosynthesis. The protein operates within cofactor biosynthesis; molybdopterin biosynthesis. Functionally, plays a central role in 2-thiolation of mcm(5)S(2)U at tRNA wobble positions of cytosolic tRNA(Lys), tRNA(Glu) and tRNA(Gln). Also essential during biosynthesis of the molybdenum cofactor. Acts by mediating the C-terminal thiocarboxylation of sulfur carriers URM1 and MOCS2A. Its N-terminus first activates URM1 and MOCS2A as acyl-adenylates (-COAMP), then the persulfide sulfur on the catalytic cysteine is transferred to URM1 and MOCS2A to form thiocarboxylation (-COSH) of their C-terminus. The reaction probably involves hydrogen sulfide that is generated from the persulfide intermediate and that acts as a nucleophile towards URM1 and MOCS2A. Subsequently, a transient disulfide bond is formed. Does not use thiosulfate as sulfur donor; NFS1 probably acting as a sulfur donor for thiocarboxylation reactions. The sequence is that of Adenylyltransferase and sulfurtransferase MOCS3 from Drosophila sechellia (Fruit fly).